Reading from the N-terminus, the 183-residue chain is ATP synthase subunit b, chloroplastic (183 aa).

A helical membrane pass occupies residues 28 to 48; it reads DIFEANVINILLLLFGLIYVL.

Belongs to the ATPase B chain family. In terms of assembly, F-type ATPases have 2 components, F(1) - the catalytic core - and F(0) - the membrane proton channel. F(1) has five subunits: alpha(3), beta(3), gamma(1), delta(1), epsilon(1). F(0) has four main subunits: a(1), b(1), b'(1) and c(10-14). The alpha and beta chains form an alternating ring which encloses part of the gamma chain. F(1) is attached to F(0) by a central stalk formed by the gamma and epsilon chains, while a peripheral stalk is formed by the delta, b and b' chains.

The protein localises to the plastid. It is found in the chloroplast thylakoid membrane. In terms of biological role, f(1)F(0) ATP synthase produces ATP from ADP in the presence of a proton or sodium gradient. F-type ATPases consist of two structural domains, F(1) containing the extramembraneous catalytic core and F(0) containing the membrane proton channel, linked together by a central stalk and a peripheral stalk. During catalysis, ATP synthesis in the catalytic domain of F(1) is coupled via a rotary mechanism of the central stalk subunits to proton translocation. Functionally, component of the F(0) channel, it forms part of the peripheral stalk, linking F(1) to F(0). This Pyropia yezoensis (Susabi-nori) protein is ATP synthase subunit b, chloroplastic.